A 556-amino-acid chain; its full sequence is Membrane protein insertase YidC (556 aa).

The helical transmembrane segment at 7–27 (ILLVALAVVAYLMVLQWNQDY) threads the bilayer. 2 disordered regions span residues 35-59 (ETAQ…GNAN) and 126-152 (SSER…PQYS). Over residues 36–54 (TAQSQPAAPALPDSPSATT) the composition is skewed to low complexity. The next 4 membrane-spanning stretches (helical) occupy residues 365–385 (LLGN…LAFF), 435–455 (LGGC…YWVL), 468–488 (FWIT…IMGV), and 513–533 (PIIF…YWVV).

The protein belongs to the OXA1/ALB3/YidC family. Type 1 subfamily. In terms of assembly, interacts with the Sec translocase complex via SecD. Specifically interacts with transmembrane segments of nascent integral membrane proteins during membrane integration.

The protein resides in the cell inner membrane. Its function is as follows. Required for the insertion and/or proper folding and/or complex formation of integral membrane proteins into the membrane. Involved in integration of membrane proteins that insert both dependently and independently of the Sec translocase complex, as well as at least some lipoproteins. Aids folding of multispanning membrane proteins. In Stutzerimonas stutzeri (strain A1501) (Pseudomonas stutzeri), this protein is Membrane protein insertase YidC.